A 967-amino-acid chain; its full sequence is RNA polymerase-associated protein RapA (967 aa).

In terms of domain architecture, Helicase ATP-binding spans 163–333 (EVGQRHAPRV…FARLRLLDPN (171 aa)). 176 to 183 (DEVGLGKT) is an ATP binding site. The short motif at 279 to 282 (DEAH) is the DEAH box element. The Helicase C-terminal domain occupies 489–677 (RVEWLLNYLT…TCRQQHDSLK (189 aa)).

It belongs to the SNF2/RAD54 helicase family. RapA subfamily. Interacts with the RNAP. Has a higher affinity for the core RNAP than for the holoenzyme. Its ATPase activity is stimulated by binding to RNAP.

Its function is as follows. Transcription regulator that activates transcription by stimulating RNA polymerase (RNAP) recycling in case of stress conditions such as supercoiled DNA or high salt concentrations. Probably acts by releasing the RNAP, when it is trapped or immobilized on tightly supercoiled DNA. Does not activate transcription on linear DNA. Probably not involved in DNA repair. In Pectobacterium atrosepticum (strain SCRI 1043 / ATCC BAA-672) (Erwinia carotovora subsp. atroseptica), this protein is RNA polymerase-associated protein RapA.